Reading from the N-terminus, the 74-residue chain is Alpha-conotoxin GeXIVA (74 aa).

Positions 1-22 (MKLTCVLIITVLFLTACQLTTA) are cleaved as a signal peptide. The propeptide occupies 23–46 (VTYSRGEHKHRALMSTGTNYRLPK). The tract at residues 56-64 (RSPYDRRRR) is interacts with alpha-9-alpha-10 (CHRNA9-CHRNA10) nAChR.

Belongs to the conotoxin O1 superfamily. Post-translationally, the native disulfide bond pairing has not been studied. Three isomers may exist: the bead isomer (I-II; III-IV), the globular isomer (I-III; II-IV), the ribbon isomer (I-IV; II-III). They have all been synthesized and their activity tested. All of them show similar potency on alpha-9-alpha-10 (CHRNA9-CHRNA10) nAChR, showing that disulfide bonds does not significantly affect their activity. In addition, removal of disulfide bonds does not affect the activity on alpha-9-alpha-10 (CHRNA9-CHRNA10) nAChR either. Expressed by the venom duct.

It localises to the secreted. Its function is as follows. Alpha-conotoxins act on postsynaptic membranes, they bind to the nicotinic acetylcholine receptors (nAChR) and thus inhibit them. This toxin is very potent on alpha-9-alpha-10/CHRNA9-CHRNA10 nAChR (IC(50)=4.61-12 nM for the bead isomer (I-II; III-IV), IC(50)=7-16 nM for the ribbon isomer (I-IV; II-III) and IC(50)=22.7 nM for the globular isomer (I-III; II-IV)). The bead isomer also shows a weak inhibition on other nAChRs (alpha-1-beta-1-delta-epsilon/CHRNA1-CHRNB1-CHRND-CHRNE, alpha-7/CHRNA7, alpha-6/alpha-3-beta-2-beta-3 (CHRNA6/CHRNA3-CHRNB2-CHRNB3), alpha-3-beta-2/CHRNA3-CHRNB2, alpha-2-beta-2/CHRNA2-CHRNB2, alpha-6/alpha-3-beta-4 (CHRNA6/CHRNA3-CHRNB4), alpha-4-beta-2/CHRNA4-CHRNB2, alpha-4-beta-4/CHRNA4-CHRNB4, alpha-2-beta-4/CHRNA2-CHRNB4, alpha-3-beta-4/CHRNA3-CHRNB4). The toxin blockade is voltage-dependent, and its binding site does not overlap with the binding site of the competitive antagonist alpha-conotoxin RgIA. The toxin inhibits Sf9 cell growth. Both the bead and ribbon isomers relieve pain effects in the rat chronic constriction injury (CCI) model of neuropathic pain, and in the acute pain model of tail flick test, but have no effect on motor performance. The protein is Alpha-conotoxin GeXIVA of Conus generalis (General cone).